We begin with the raw amino-acid sequence, 643 residues long: Phosphomethylpyrimidine synthase (643 aa).

Residues Asn-248, Met-277, Tyr-306, His-342, 362–364, 403–406, and Glu-442 each bind substrate; these read SRG and DGLR. His-446 provides a ligand contact to Zn(2+). Position 469 (Tyr-469) interacts with substrate. His-510 contributes to the Zn(2+) binding site. 3 residues coordinate [4Fe-4S] cluster: Cys-590, Cys-593, and Cys-598.

It belongs to the ThiC family. In terms of assembly, homodimer. It depends on [4Fe-4S] cluster as a cofactor.

It catalyses the reaction 5-amino-1-(5-phospho-beta-D-ribosyl)imidazole + S-adenosyl-L-methionine = 4-amino-2-methyl-5-(phosphooxymethyl)pyrimidine + CO + 5'-deoxyadenosine + formate + L-methionine + 3 H(+). The protein operates within cofactor biosynthesis; thiamine diphosphate biosynthesis. Functionally, catalyzes the synthesis of the hydroxymethylpyrimidine phosphate (HMP-P) moiety of thiamine from aminoimidazole ribotide (AIR) in a radical S-adenosyl-L-methionine (SAM)-dependent reaction. The chain is Phosphomethylpyrimidine synthase from Burkholderia multivorans (strain ATCC 17616 / 249).